A 273-amino-acid polypeptide reads, in one-letter code: Dermonecrotic toxin LdSicTox-alphaIB1aii (273 aa).

His5 is a catalytic residue. Positions 25 and 27 each coordinate Mg(2+). The active-site Nucleophile is His41. 2 disulfide bridges follow: Cys45–Cys51 and Cys47–Cys190. Residue Asp85 coordinates Mg(2+). N-linked (GlcNAc...) asparagine glycosylation occurs at Asn250.

The protein belongs to the arthropod phospholipase D family. Class II subfamily. Mg(2+) is required as a cofactor. As to expression, expressed by the venom gland.

The protein localises to the secreted. The enzyme catalyses an N-(acyl)-sphingosylphosphocholine = an N-(acyl)-sphingosyl-1,3-cyclic phosphate + choline. It carries out the reaction an N-(acyl)-sphingosylphosphoethanolamine = an N-(acyl)-sphingosyl-1,3-cyclic phosphate + ethanolamine. It catalyses the reaction a 1-acyl-sn-glycero-3-phosphocholine = a 1-acyl-sn-glycero-2,3-cyclic phosphate + choline. The catalysed reaction is a 1-acyl-sn-glycero-3-phosphoethanolamine = a 1-acyl-sn-glycero-2,3-cyclic phosphate + ethanolamine. Its function is as follows. Dermonecrotic toxins cleave the phosphodiester linkage between the phosphate and headgroup of certain phospholipids (sphingolipid and lysolipid substrates), forming an alcohol (often choline) and a cyclic phosphate. This toxin acts on sphingomyelin (SM). It may also act on ceramide phosphoethanolamine (CPE), lysophosphatidylcholine (LPC) and lysophosphatidylethanolamine (LPE), but not on lysophosphatidylserine (LPS), and lysophosphatidylglycerol (LPG). It acts by transphosphatidylation, releasing exclusively cyclic phosphate products as second products. Induces dermonecrosis, hemolysis, increased vascular permeability, edema, inflammatory response, and platelet aggregation. The protein is Dermonecrotic toxin LdSicTox-alphaIB1aii of Loxosceles deserta (Desert recluse spider).